A 286-amino-acid chain; its full sequence is 4-diphosphocytidyl-2-C-methyl-D-erythritol kinase (286 aa).

Residue Lys11 is part of the active site. 94-104 (PMGGGIGGGSS) is an ATP binding site. The active site involves Asp136.

Belongs to the GHMP kinase family. IspE subfamily.

It catalyses the reaction 4-CDP-2-C-methyl-D-erythritol + ATP = 4-CDP-2-C-methyl-D-erythritol 2-phosphate + ADP + H(+). The protein operates within isoprenoid biosynthesis; isopentenyl diphosphate biosynthesis via DXP pathway; isopentenyl diphosphate from 1-deoxy-D-xylulose 5-phosphate: step 3/6. Catalyzes the phosphorylation of the position 2 hydroxy group of 4-diphosphocytidyl-2C-methyl-D-erythritol. The sequence is that of 4-diphosphocytidyl-2-C-methyl-D-erythritol kinase from Pseudomonas putida (strain GB-1).